The sequence spans 156 residues: 6,7-dimethyl-8-ribityllumazine synthase (156 aa).

5-amino-6-(D-ribitylamino)uracil is bound by residues Phe22, 56–58, and 80–82; these read ALE and AVI. 85–86 is a binding site for (2S)-2-hydroxy-3-oxobutyl phosphate; it reads DT. Catalysis depends on His88, which acts as the Proton donor. Phe113 contacts 5-amino-6-(D-ribitylamino)uracil. Arg127 is a (2S)-2-hydroxy-3-oxobutyl phosphate binding site.

Belongs to the DMRL synthase family.

It catalyses the reaction (2S)-2-hydroxy-3-oxobutyl phosphate + 5-amino-6-(D-ribitylamino)uracil = 6,7-dimethyl-8-(1-D-ribityl)lumazine + phosphate + 2 H2O + H(+). Its pathway is cofactor biosynthesis; riboflavin biosynthesis; riboflavin from 2-hydroxy-3-oxobutyl phosphate and 5-amino-6-(D-ribitylamino)uracil: step 1/2. Functionally, catalyzes the formation of 6,7-dimethyl-8-ribityllumazine by condensation of 5-amino-6-(D-ribitylamino)uracil with 3,4-dihydroxy-2-butanone 4-phosphate. This is the penultimate step in the biosynthesis of riboflavin. In Leuconostoc mesenteroides subsp. mesenteroides (strain ATCC 8293 / DSM 20343 / BCRC 11652 / CCM 1803 / JCM 6124 / NCDO 523 / NBRC 100496 / NCIMB 8023 / NCTC 12954 / NRRL B-1118 / 37Y), this protein is 6,7-dimethyl-8-ribityllumazine synthase.